The chain runs to 291 residues: Pirin (291 aa).

Fe cation contacts are provided by His56, His58, His101, and Glu103.

Belongs to the pirin family. In terms of assembly, may interact with NF1/CTF1. Interacts with BCL3. Identified in a complex comprised of PIR, BLC3, NFKB1 and target DNA. Requires Fe cation as cofactor.

Its subcellular location is the nucleus. The protein localises to the cytoplasm. The catalysed reaction is quercetin + O2 = 2-(3,4-dihydroxybenzoyloxy)-4,6-dihydroxybenzoate + CO. Its pathway is flavonoid metabolism; quercetin degradation. Transcriptional coregulator of NF-kappa-B which facilitates binding of NF-kappa-B proteins to target kappa-B genes in a redox-state-dependent manner. May be required for efficient terminal myeloid maturation of hematopoietic cells. Has quercetin 2,3-dioxygenase activity (in vitro). This chain is Pirin (Pir), found in Rattus norvegicus (Rat).